Consider the following 26-residue polypeptide: Turripeptide OL49 (26 aa).

Post-translationally, contains 3 disulfide bonds. Expressed by the venom duct.

It is found in the secreted. Functionally, acts as a neurotoxin by inhibiting an ion channel. In Iotyrris olangoensis (Sea snail), this protein is Turripeptide OL49.